A 402-amino-acid polypeptide reads, in one-letter code: MKRLWQHCHAATLKGGKYSIVEDAALVTDGPLIHWIGPRAELPPDDYAERIDLDGAWLTPGLIDCHTHAVFGGNRSGEFEQRLEGVSYAEIAAAGGGIASTVRATREASEEELLASARKRLDPLLRDGVTALEIKSGYGLDLASERKMLRVIRRLGERLPATVRSTCLAAHALPPEYAGRADDYIEHICSTMLPALAGEGLVDAVDAFCEHLAFSPAQVERVFIAARELGLPVKLHAEQLSSLHGSSLAARYRALSADHLEYMTEDDARSMGEAGTVAVLLPGAFYLLRETQLPPIDALRRHGVAMAIASDLNPGTSPALSLRLMLNMACTLFRLTPEEALAGVTLHAARALGLEARHGSLEVGKLADFVAWDIERPAELAYWLGGDLPKRVIRHAEEVYRG.

Residues histidine 66 and histidine 68 each contribute to the Fe(3+) site. Zn(2+) contacts are provided by histidine 66 and histidine 68. Residues arginine 75, tyrosine 138, and histidine 171 each coordinate 4-imidazolone-5-propanoate. Tyrosine 138 is an N-formimidoyl-L-glutamate binding site. Histidine 236 serves as a coordination point for Fe(3+). Position 236 (histidine 236) interacts with Zn(2+). Glutamine 239 contacts 4-imidazolone-5-propanoate. Fe(3+) is bound at residue aspartate 311. Residue aspartate 311 participates in Zn(2+) binding. N-formimidoyl-L-glutamate is bound by residues asparagine 313 and glycine 315. Threonine 316 lines the 4-imidazolone-5-propanoate pocket.

This sequence belongs to the metallo-dependent hydrolases superfamily. HutI family. The cofactor is Zn(2+). Requires Fe(3+) as cofactor.

Its subcellular location is the cytoplasm. The enzyme catalyses 4-imidazolone-5-propanoate + H2O = N-formimidoyl-L-glutamate. The protein operates within amino-acid degradation; L-histidine degradation into L-glutamate; N-formimidoyl-L-glutamate from L-histidine: step 3/3. Functionally, catalyzes the hydrolytic cleavage of the carbon-nitrogen bond in imidazolone-5-propanoate to yield N-formimidoyl-L-glutamate. It is the third step in the universal histidine degradation pathway. This Pseudomonas aeruginosa (strain UCBPP-PA14) protein is Imidazolonepropionase.